Here is a 219-residue protein sequence, read N- to C-terminus: Formate dehydrogenase 2 subunit beta (cytochrome c-553) (219 aa).

The 30-residue stretch at 3–32 (KAFLIDTTRCTACRGCQLACKEWHDLPANV) folds into the 4Fe-4S ferredoxin-type 1 domain. Residues Cys-12, Cys-15, Cys-18, Cys-22, Cys-74, Cys-77, Cys-82, Cys-124, Cys-141, Cys-144, Cys-156, and Cys-160 each coordinate [4Fe-4S] cluster. The 4Fe-4S ferredoxin-type 2 domain maps to 132-171 (DPKTKRITKCDMCFDRVSAGMQPICVKTCPTGTMAFGERD).

As to quaternary structure, heterotrimer of cytochrome c3 FDH2C and formate dehydrogenase FDH2 alpha and beta subunits that forms the FdhABC(3) complex. [4Fe-4S] cluster is required as a cofactor.

It localises to the periplasm. Beta chain of the formate dehydrogenase (FDH) that catalyzes the reversible two-electron oxidation of formate to carbon dioxide. The beta chain is an electron transfer unit. This chain is Formate dehydrogenase 2 subunit beta (cytochrome c-553), found in Nitratidesulfovibrio vulgaris (strain ATCC 29579 / DSM 644 / CCUG 34227 / NCIMB 8303 / VKM B-1760 / Hildenborough) (Desulfovibrio vulgaris).